A 319-amino-acid polypeptide reads, in one-letter code: Acetyl-coenzyme A carboxylase carboxyl transferase subunit alpha (319 aa).

A CoA carboxyltransferase C-terminal domain is found at 35–296 (NIDEEVHRLR…KAQLLEDLAD (262 aa)).

This sequence belongs to the AccA family. In terms of assembly, acetyl-CoA carboxylase is a heterohexamer composed of biotin carboxyl carrier protein (AccB), biotin carboxylase (AccC) and two subunits each of ACCase subunit alpha (AccA) and ACCase subunit beta (AccD).

It localises to the cytoplasm. The enzyme catalyses N(6)-carboxybiotinyl-L-lysyl-[protein] + acetyl-CoA = N(6)-biotinyl-L-lysyl-[protein] + malonyl-CoA. It functions in the pathway lipid metabolism; malonyl-CoA biosynthesis; malonyl-CoA from acetyl-CoA: step 1/1. In terms of biological role, component of the acetyl coenzyme A carboxylase (ACC) complex. First, biotin carboxylase catalyzes the carboxylation of biotin on its carrier protein (BCCP) and then the CO(2) group is transferred by the carboxyltransferase to acetyl-CoA to form malonyl-CoA. This is Acetyl-coenzyme A carboxylase carboxyl transferase subunit alpha from Salmonella agona (strain SL483).